A 143-amino-acid polypeptide reads, in one-letter code: Antitumor antibiotic C-1027 apoprotein (143 aa).

The signal sequence occupies residues 1–33; that stretch reads MSLRHMSRRASRFGVVAVASIGLAAAAQSVAFA. Cystine bridges form between C69-C78 and C119-C124.

It belongs to the neocarzinostatin family.

Binds non-covalently to a chromophore which is the cytotoxic and mutagenic component of the antibiotic. The chromophore binds to DNA as a weak intercalator and causes single- and double-strand breaks. This is Antitumor antibiotic C-1027 apoprotein (cagA) from Streptomyces globisporus.